The following is a 143-amino-acid chain: General odorant-binding protein 28a (143 aa).

The first 21 residues, 1-21, serve as a signal peptide directing secretion; the sequence is MQSTPIILVAIVLLGAALVRA. 3 disulfides stabilise this stretch: C38/C69, C65/C123, and C113/C132.

In terms of tissue distribution, expressed in antenna, mostly on the medial and posterior surface of the third antennal segment.

It is found in the secreted. The protein is General odorant-binding protein 28a (Obp28a) of Drosophila melanogaster (Fruit fly).